Here is a 271-residue protein sequence, read N- to C-terminus: Phosphatidylinositol transfer protein alpha isoform (271 aa).

Residues threonine 59, lysine 61, glutamate 86, asparagine 90, threonine 97, and lysine 195 each contribute to the a 1,2-diacyl-sn-glycero-3-phospho-(1D-myo-inositol) site. The residue at position 216 (lysine 216) is an N6-acetyllysine. Over residues 251–264 the composition is skewed to basic and acidic residues; the sequence is TKRQLDEMRQKDPV. Positions 251 to 271 are disordered; that stretch reads TKRQLDEMRQKDPVKGMTADD.

The protein belongs to the PtdIns transfer protein family. PI transfer class I subfamily. Phosphorylated by PKC in a calcium and phosphatidylserine-dependent manner. In terms of tissue distribution, expressed in a wide range of tissues.

The protein resides in the cytoplasm. The protein localises to the nucleus. The enzyme catalyses a 1,2-diacyl-sn-glycero-3-phosphocholine(in) = a 1,2-diacyl-sn-glycero-3-phosphocholine(out). The catalysed reaction is a 1,2-diacyl-sn-glycero-3-phospho-(1D-myo-inositol)(in) = a 1,2-diacyl-sn-glycero-3-phospho-(1D-myo-inositol)(out). Phosphatidylinositol transfer activity is inhibited by N-ethylmaleimide. Catalyzes the transfer of phosphatidylinositol (PI) and phosphatidylcholine (PC) between membranes. Shows a preference for PI and PC containing shorter saturated or monosaturated acyl chains at the sn-1 and sn-2 positions. Preference order for PC is C16:1 &gt; C16:0 &gt; C18:1 &gt; C18:0 &gt; C20:4 and for PI is C16:1 &gt; C16:0 &gt; C18:1 &gt; C18:0 &gt; C20:4 &gt; C20:3. This Rattus norvegicus (Rat) protein is Phosphatidylinositol transfer protein alpha isoform (Pitpna).